We begin with the raw amino-acid sequence, 223 residues long: Transcriptional regulatory protein PhoP (223 aa).

The Response regulatory domain maps to 2–116 (RVLVVEDNAL…EVMARMQALM (115 aa)). Asp51 carries the 4-aspartylphosphate modification. A DNA-binding region (ompR/PhoB-type) is located at residues 124–222 (SQVISLPPFQ…VRGQGYLFEL (99 aa)).

As to quaternary structure, monomer in the inactive, unphosphorylated state and dimer in the active, phosphorylated state. Phosphorylated by PhoQ.

The protein resides in the cytoplasm. Its activity is regulated as follows. Feedback inhibited by MgrB, which seems to bind PhoQ, altering its activity and that of downstream effector PhoP. PhoP-regulated transcription is redox-sensitive, being activated when the periplasm becomes more reducing (deletion of dsbA/dsbB, or treatment with dithiothreitol). MgrB acts between DsbA/DsbB and PhoP/PhoQ in this pathway. Its function is as follows. Member of the two-component regulatory system PhoP/PhoQ involved in adaptation to low Mg(2+) environments and the control of acid resistance genes. In low periplasmic Mg(2+), PhoQ phosphorylates PhoP, resulting in the expression of PhoP-activated genes (PAG) and repression of PhoP-repressed genes (PRG). In high periplasmic Mg(2+), PhoQ dephosphorylates phospho-PhoP, resulting in the repression of PAG and may lead to expression of some PRG. Mediates magnesium influx to the cytosol by activation of MgtA. Promotes expression of the two-component regulatory system rstA/rstB and transcription of the hemL, mgrB, nagA, slyB, vboR and yrbL genes. The protein is Transcriptional regulatory protein PhoP (phoP) of Escherichia coli (strain K12).